The primary structure comprises 187 residues: MQILNPILPVMEDILGNLAELKASGKITNQQIDTVELQWYESERNILRKTSKSGREVAFRLLKEGQRLKHDDVVFVSESLVIAIEILPSEVIVLSPKTLPEMARACYEIGNKHSPLFLDGDEVTLPYDKPMFEWLQAAGFGPQKAERRLSQALRANSAQGHGHSHGHSHSHDHHGYHHHGDGNWHKH.

The segment at 154-187 is disordered; that stretch reads RANSAQGHGHSHGHSHSHDHHGYHHHGDGNWHKH. The span at 162–177 shows a compositional bias: basic residues; that stretch reads GHSHGHSHSHDHHGYH. A compositionally biased stretch (basic and acidic residues) spans 178 to 187; that stretch reads HHGDGNWHKH.

This sequence belongs to the UreE family.

It is found in the cytoplasm. Involved in urease metallocenter assembly. Binds nickel. Probably functions as a nickel donor during metallocenter assembly. The protein is Urease accessory protein UreE of Actinobacillus pleuropneumoniae (Haemophilus pleuropneumoniae).